Consider the following 66-residue polypeptide: Alpha-like toxin BeM9 (66 aa).

The 65-residue stretch at 2-66 (RDAYIAKPHN…VPIRIPGKCH (65 aa)) folds into the LCN-type CS-alpha/beta domain. Disulfide bonds link cysteine 12–cysteine 65, cysteine 16–cysteine 38, cysteine 24–cysteine 48, and cysteine 28–cysteine 50.

The protein belongs to the long (4 C-C) scorpion toxin superfamily. Sodium channel inhibitor family. Alpha subfamily. In terms of tissue distribution, expressed by the venom gland.

The protein localises to the secreted. Functionally, alpha toxins bind voltage-independently at site-3 of sodium channels (Nav) and inhibit the inactivation of the activated channels, thereby blocking neuronal transmission. This toxin is active on both mammals and insects, since it inhibits inactivation of rNav1.4/SCN4A, hNav1.5/SCN5A, mNav1.6/SCN8A and insect BgNav1 and DmNav1 channels. In vivo, it shows paralytic activity in mice. The chain is Alpha-like toxin BeM9 from Mesobuthus eupeus (Lesser Asian scorpion).